Consider the following 319-residue polypeptide: Putative replication factor C small subunit R395 (319 aa).

45-52 serves as a coordination point for ATP; that stretch reads GSPGVGKT.

Belongs to the activator 1 small subunits family. RfcS subfamily.

Its function is as follows. Part of the RFC clamp loader complex which loads the PCNA sliding clamp onto DNA. The chain is Putative replication factor C small subunit R395 from Acanthamoeba polyphaga mimivirus (APMV).